The sequence spans 303 residues: MRIGTRGSKLALAQAEKVRRLLKEQGVEATITVIKTSGDVQKDSPLYMMKGYGAFVREIDDLLLKNEVDLAVHSLKDIPTVRPENLVTAAVLKRESALDVAVIRNAERLADLPEGAVVGTSSTRRAAMIYRHYPGLVTKDIRGNVDTRLRKLRDGEYDAILLAEAGLIRLGLDLKVERLDPYNFVPAANQGVIAIVARQGTPEAEVVKELNDETTWIETRVERIIAAGLDGGCVVPMGVYATRVGDEIDVIGEVLSLDGRQQVRVRETIPVAGCEEHAKQVSEKLVLAGGLKLAEEARKELDR.

Cys-233 bears the S-(dipyrrolylmethanemethyl)cysteine mark.

This sequence belongs to the HMBS family. Dipyrromethane serves as cofactor.

It carries out the reaction 4 porphobilinogen + H2O = hydroxymethylbilane + 4 NH4(+). It functions in the pathway porphyrin-containing compound metabolism; protoporphyrin-IX biosynthesis; coproporphyrinogen-III from 5-aminolevulinate: step 2/4. Functionally, tetrapolymerization of the monopyrrole PBG into the hydroxymethylbilane pre-uroporphyrinogen in several discrete steps. The chain is Probable porphobilinogen deaminase from Methanocella arvoryzae (strain DSM 22066 / NBRC 105507 / MRE50).